The following is a 408-amino-acid chain: Aminoacylase-1 (408 aa).

His80 provides a ligand contact to Zn(2+). Asp82 is an active-site residue. Asp113 is a binding site for Zn(2+). Glu147 serves as the catalytic Proton acceptor. Positions 148, 175, and 373 each coordinate Zn(2+).

This sequence belongs to the peptidase M20A family. In terms of assembly, homodimer. Interacts with SPHK1. The cofactor is Zn(2+).

The protein resides in the cytoplasm. The enzyme catalyses an N-acyl-L-amino acid + H2O = an L-alpha-amino acid + a carboxylate. It catalyses the reaction N-acetyl-L-methionine + H2O = L-methionine + acetate. It carries out the reaction N-acetyl-L-glutamine + H2O = L-glutamine + acetate. Functionally, catalyzes the hydrolysis of N-acetylated amino acids to acetate and free amino acids. The protein is Aminoacylase-1 (Acy1) of Mus musculus (Mouse).